Consider the following 230-residue polypeptide: Large ribosomal subunit protein uL1 (230 aa).

The protein belongs to the universal ribosomal protein uL1 family. As to quaternary structure, part of the 50S ribosomal subunit.

Binds directly to 23S rRNA. The L1 stalk is quite mobile in the ribosome, and is involved in E site tRNA release. Its function is as follows. Protein L1 is also a translational repressor protein, it controls the translation of the L11 operon by binding to its mRNA. The protein is Large ribosomal subunit protein uL1 of Acidiphilium cryptum (strain JF-5).